The sequence spans 1093 residues: Electroneutral sodium bicarbonate exchanger 1 (1093 aa).

Disordered stretches follow at residues Met1–Asp25 and Pro55–Pro95. Residues Met1 to Cys478 are Extracellular-facing. Positions Gln59 to Gly77 are enriched in basic residues. Zn(2+)-binding residues include Phe167 and Leu169. The VTVLP; mediates dimerization motif lies at Leu340–Leu344. Residues Leu479 to Leu499 traverse the membrane as a helical segment. Residues Leu500–Ala523 are Cytoplasmic-facing. The chain crosses the membrane as a helical span at residues Tyr524–Phe544. Topologically, residues Glu545–Cys565 are extracellular. The chain crosses the membrane as a helical span at residues Ile566 to Val586. The Cytoplasmic portion of the chain corresponds to Cys587–Glu595. The helical transmembrane segment at Ala596–Leu616 threads the bilayer. At Ala617–His687 the chain is on the extracellular side. 2 cysteine pairs are disulfide-bonded: Cys636–Cys684 and Cys638–Cys672. Asn646 is a glycosylation site (N-linked (GlcNAc) asparagine). Residues Gly688 to Leu708 traverse the membrane as a helical segment. The Cytoplasmic segment spans residues Ser709–Asp731. Residues Phe732 to Ser752 traverse the membrane as a helical segment. At Pro753 to Asn778 the chain is on the extracellular side. Residues Pro779 to Met799 form a helical membrane-spanning segment. The Cytoplasmic segment spans residues Asp800–Asp824. A helical membrane pass occupies residues Leu825–Ala845. Topologically, residues Ala846–Thr881 are extracellular. The chain crosses the membrane as a helical span at residues Gly882 to Ile902. At Pro903–Met904 the chain is on the cytoplasmic side. Residues Pro905–Phe925 traverse the membrane as a helical segment. At Asp926–Cys962 the chain is on the extracellular side. Residues Leu963 to Leu983 traverse the membrane as a helical segment. Over Ala984–Asn1093 the chain is Cytoplasmic. Residues Glu1010–Gly1036 are a coiled coil.

The protein belongs to the anion exchanger (TC 2.A.31) family. In terms of assembly, homodimer. Expressed in the pyramidal cells of the hippocampus (at protein level). Highly expressed in all major regions of the brain, spinal column and in testis, and moderate levels in trachea, thyroid and medulla region of kidney. Low expression levels observed in pancreas and kidney cortex. In terms of tissue distribution, expressed in the brain. As to expression, expressed in the brain, heart and kidney.

Its subcellular location is the apical cell membrane. It is found in the basolateral cell membrane. The protein resides in the cytoplasmic vesicle. It localises to the secretory vesicle. The protein localises to the synaptic vesicle membrane. Its subcellular location is the cell membrane. The catalysed reaction is 2 hydrogencarbonate(out) + chloride(in) + Na(+)(out) = 2 hydrogencarbonate(in) + chloride(out) + Na(+)(in). Activity is inhibited by 4,4'-Di-isothiocyanatostilbene-2,2'-disulfonic acid (DIDS - an inhibitor of several anion channels and transporters). With respect to regulation, activity is inhibited by 4,4'-Di-isothiocyanatostilbene-2,2'-disulfonic acid (DIDS - an inhibitor of several anion channels and transporters). Zinc-binding negatively regulates its activity. Functionally, mediates electroneutral sodium- and carbonate-dependent chloride-HCO3(-) exchange with a Na(+):HCO3(-) stoichiometry of 2:1. Plays a major role in pH regulation in neurons. Mediates sodium reabsorption in the renal cortical collecting ducts. The polypeptide is Electroneutral sodium bicarbonate exchanger 1 (Homo sapiens (Human)).